The primary structure comprises 1165 residues: Sperm-associated antigen 5 (1165 aa).

Positions 1 to 23 (MWRVKTLNLGLSPSPQKGKPAMS) are disordered. 7 positions are modified to phosphoserine: serine 12, serine 14, serine 66, serine 161, serine 321, serine 333, and serine 342. Residues 431–457 (TVPHREARDSSTQTDSSPCGVTKTPKH) are disordered. Positions 440–449 (SSTQTDSSPC) are enriched in polar residues. An interaction with KNSTRN region spans residues 453-821 (KTPKHLQDSK…LRDTVDSLRA (369 aa)). Positions 509–856 (RSKTLVSSCS…LLAEQLQSLT (348 aa)) form a coiled coil. The disordered stretch occupies residues 875-907 (PSTGSAPAQEHPLSNDSSISEQTPTAAVDEVPE). Residues 876–897 (STGSAPAQEHPLSNDSSISEQT) show a composition bias toward polar residues. A coiled-coil region spans residues 937–1146 (DLEKSLAEMS…IQHVYETLLS (210 aa)). Residue serine 946 is modified to Phosphoserine; by GSK3-beta.

In terms of assembly, homodimer, with a globular head domain and a long stalk. Homooligomer; the globular head domains associate, resulting in aster-like structures. Binds to microtubules in the mitotic spindle. Interacts with DCLRE1B/Apollo. Part of an astrin (SPAG5)-kinastrin (SKAP) complex containing KNSTRN, SPAG5, PLK1, DYNLL1 and SGO2A. Interacts with KNSTRN. Interacts with RPTOR; this interaction competes with RPTOR binding to MTOR, resulting in decreased mTORC1 formation. Interacts with G3BP1. The complex formed with G3BP1 and RPTOR is increased by oxidative stress. Interacts with OSBPL8, PCM1 and CDK5RAP2. Interacts (via C-terminus) with NUMA1 (via C-terminus); this interaction promotes the recruitment of SPAG5 to the microtubules at spindle poles in a dynein-dynactin-dependent manner. Interacts with DYNLL1. In terms of processing, phosphorylated by AURKA. In terms of tissue distribution, detected in testis, but not in the other tissues tested.

The protein resides in the cytoplasm. It is found in the cytoskeleton. The protein localises to the spindle. Its subcellular location is the spindle pole. It localises to the chromosome. The protein resides in the centromere. It is found in the kinetochore. The protein localises to the midbody. Its subcellular location is the microtubule organizing center. It localises to the centrosome. The protein resides in the centriolar satellite. Functionally, essential component of the mitotic spindle required for normal chromosome segregation and progression into anaphase. Required for chromosome alignment, normal timing of sister chromatid segregation, and maintenance of spindle pole architecture. In complex with SKAP, promotes stable microtubule-kinetochore attachments. May contribute to the regulation of separase activity. May regulate AURKA localization to mitotic spindle, but not to centrosomes and CCNB1 localization to both mitotic spindle and centrosomes. Involved in centriole duplication. Required for CDK5RAP22, CEP152, WDR62 and CEP63 centrosomal localization and promotes the centrosomal localization of CDK2. In non-mitotic cells, upon stress induction, inhibits mammalian target of rapamycin complex 1 (mTORC1) association and recruits the mTORC1 component RPTOR to stress granules (SGs), thereby preventing mTORC1 hyperactivation-induced apoptosis. May enhance GSK3B-mediated phosphorylation of other substrates, such as MAPT/TAU. This chain is Sperm-associated antigen 5 (Spag5), found in Mus musculus (Mouse).